A 204-amino-acid chain; its full sequence is Acyl-homoserine-lactone synthase (204 aa).

Belongs to the autoinducer synthase family.

It carries out the reaction a fatty acyl-[ACP] + S-adenosyl-L-methionine = an N-acyl-L-homoserine lactone + S-methyl-5'-thioadenosine + holo-[ACP] + H(+). Required for the synthesis of acyl-HSL autoinducers that bind to SolR. The sequence is that of Acyl-homoserine-lactone synthase (solI) from Ralstonia solanacearum (Pseudomonas solanacearum).